Here is a 164-residue protein sequence, read N- to C-terminus: MERFLENAMYASRWLLAPVYFGLSLALVALALKFFQEIIHVLPNIFSMAESDLILVLLSLVDMTLVGGLLVMVMFSGYENFVSQLDISENKEKLKWLGKMDATSLKNKVAASIVAISSIHLLRVFMDAKNVPDNKLMWYVIIHLTFVLSAFVMGYLDRLTRHNH.

The next 3 membrane-spanning stretches (helical) occupy residues 10–32, 53–75, and 136–155; these read YASR…ALAL, LILV…MVMF, and LMWY…VMGY.

Belongs to the UPF0114 family.

Its subcellular location is the cell membrane. The sequence is that of UPF0114 protein YqhA from Shigella flexneri.